Consider the following 184-residue polypeptide: UPF0316 protein BPUM_0594 (184 aa).

The next 3 membrane-spanning stretches (helical) occupy residues 9–29 (AFTM…FSTM), 41–61 (AAAF…SIVL), and 67–87 (IQNV…GMKI).

Belongs to the UPF0316 family.

The protein localises to the cell membrane. The sequence is that of UPF0316 protein BPUM_0594 from Bacillus pumilus (strain SAFR-032).